The chain runs to 224 residues: Thiamine-phosphate synthase (224 aa).

4-amino-2-methyl-5-(diphosphooxymethyl)pyrimidine-binding positions include 41–45 and aspartate 77; that span reads QFRDK. Mg(2+)-binding residues include aspartate 78 and aspartate 97. Serine 116 is a binding site for 4-amino-2-methyl-5-(diphosphooxymethyl)pyrimidine. 2-[(2R,5Z)-2-carboxy-4-methylthiazol-5(2H)-ylidene]ethyl phosphate is bound at residue 143–145; sequence TNS. Lysine 146 contacts 4-amino-2-methyl-5-(diphosphooxymethyl)pyrimidine. 2-[(2R,5Z)-2-carboxy-4-methylthiazol-5(2H)-ylidene]ethyl phosphate contacts are provided by residues glycine 174 and 194–195; that span reads IS.

Belongs to the thiamine-phosphate synthase family. Requires Mg(2+) as cofactor.

It carries out the reaction 2-[(2R,5Z)-2-carboxy-4-methylthiazol-5(2H)-ylidene]ethyl phosphate + 4-amino-2-methyl-5-(diphosphooxymethyl)pyrimidine + 2 H(+) = thiamine phosphate + CO2 + diphosphate. The catalysed reaction is 2-(2-carboxy-4-methylthiazol-5-yl)ethyl phosphate + 4-amino-2-methyl-5-(diphosphooxymethyl)pyrimidine + 2 H(+) = thiamine phosphate + CO2 + diphosphate. The enzyme catalyses 4-methyl-5-(2-phosphooxyethyl)-thiazole + 4-amino-2-methyl-5-(diphosphooxymethyl)pyrimidine + H(+) = thiamine phosphate + diphosphate. It participates in cofactor biosynthesis; thiamine diphosphate biosynthesis; thiamine phosphate from 4-amino-2-methyl-5-diphosphomethylpyrimidine and 4-methyl-5-(2-phosphoethyl)-thiazole: step 1/1. In terms of biological role, condenses 4-methyl-5-(beta-hydroxyethyl)thiazole monophosphate (THZ-P) and 2-methyl-4-amino-5-hydroxymethyl pyrimidine pyrophosphate (HMP-PP) to form thiamine monophosphate (TMP). The sequence is that of Thiamine-phosphate synthase from Latilactobacillus sakei subsp. sakei (strain 23K) (Lactobacillus sakei subsp. sakei).